The chain runs to 334 residues: Eukaryotic translation initiation factor 3 subunit H (334 aa).

The MPN domain occupies 20–152; that stretch reads VQCDGLAAMK…LKAYRLTPQA (133 aa).

It belongs to the eIF-3 subunit H family. In terms of assembly, component of the eukaryotic translation initiation factor 3 (eIF-3) complex.

The protein localises to the cytoplasm. Component of the eukaryotic translation initiation factor 3 (eIF-3) complex, which is involved in protein synthesis of a specialized repertoire of mRNAs and, together with other initiation factors, stimulates binding of mRNA and methionyl-tRNAi to the 40S ribosome. The eIF-3 complex specifically targets and initiates translation of a subset of mRNAs involved in cell proliferation. The polypeptide is Eukaryotic translation initiation factor 3 subunit H (Anopheles gambiae (African malaria mosquito)).